We begin with the raw amino-acid sequence, 291 residues long: 4-hydroxy-tetrahydrodipicolinate synthase (291 aa).

Position 45 (threonine 45) interacts with pyruvate. The Proton donor/acceptor role is filled by tyrosine 133. Lysine 161 (schiff-base intermediate with substrate) is an active-site residue. Isoleucine 203 contributes to the pyruvate binding site.

It belongs to the DapA family. Homotetramer; dimer of dimers.

Its subcellular location is the cytoplasm. The enzyme catalyses L-aspartate 4-semialdehyde + pyruvate = (2S,4S)-4-hydroxy-2,3,4,5-tetrahydrodipicolinate + H2O + H(+). It functions in the pathway amino-acid biosynthesis; L-lysine biosynthesis via DAP pathway; (S)-tetrahydrodipicolinate from L-aspartate: step 3/4. Functionally, catalyzes the condensation of (S)-aspartate-beta-semialdehyde [(S)-ASA] and pyruvate to 4-hydroxy-tetrahydrodipicolinate (HTPA). This Laribacter hongkongensis (strain HLHK9) protein is 4-hydroxy-tetrahydrodipicolinate synthase.